The following is a 142-amino-acid chain: MLEGWFLWFILFWVIMMVVLLSIGGFFMFRKFLKRLPKEDGRSELDWQDYYIENSRHLWNDENKQFLDELTAPVPELFRDAAKAKIAGKIGELALKEKVAKIDQQLMIKGYILATPKRDHTFLKRHLRDKKIDLEPYQTLLK.

Residues Phe6 to Phe26 form a helical membrane-spanning segment.

As to quaternary structure, interacts with the N-terminal D1 domain of dynamin-like protein DynA.

The protein resides in the cell membrane. The sequence is that of Membrane protein YneK (yneK) from Bacillus subtilis (strain 168).